The chain runs to 392 residues: O-phospho-L-seryl-tRNA:Cys-tRNA synthase (392 aa).

Residues 85 to 86, Asn-190, and 213 to 215 each bind pyridoxal 5'-phosphate; these read AR and SGH. Lys-216 is subject to N6-(pyridoxal phosphate)lysine.

It belongs to the SepCysS family. In terms of assembly, homodimer. Interacts with SepRS. The cofactor is pyridoxal 5'-phosphate.

It catalyses the reaction O-phospho-L-seryl-tRNA(Cys) + hydrogen sulfide + H(+) = L-cysteinyl-tRNA(Cys) + phosphate. Functionally, converts O-phospho-L-seryl-tRNA(Cys) (Sep-tRNA(Cys)) to L-cysteinyl-tRNA(Cys) (Cys-tRNA(Cys)). This chain is O-phospho-L-seryl-tRNA:Cys-tRNA synthase, found in Methanoculleus marisnigri (strain ATCC 35101 / DSM 1498 / JR1).